The following is a 281-amino-acid chain: Undecaprenyl-diphosphatase (281 aa).

Transmembrane regions (helical) follow at residues 5-25 (LFVLKSIVLGIVEGVTEFLPI), 48-68 (VKMYTYVIQLGAIMAVVLLYW), 92-112 (FWFMIFIACIPGAAVKLLLDA), 118-138 (LMTPVSVAIVLILGGLWMIYA), 154-174 (VTPKQALIIGAFQCLAIIPGM), 192-212 (VVAAEFSFFLAIPVMFGYSLL), 226-246 (AELISLVVGFIVAFIVAVAVI), and 261-281 (FAIYRMIFAVIVLIAGFMGFF).

Belongs to the UppP family.

It localises to the cell membrane. The catalysed reaction is di-trans,octa-cis-undecaprenyl diphosphate + H2O = di-trans,octa-cis-undecaprenyl phosphate + phosphate + H(+). Catalyzes the dephosphorylation of undecaprenyl diphosphate (UPP). Confers resistance to bacitracin. This is Undecaprenyl-diphosphatase from Ruminiclostridium cellulolyticum (strain ATCC 35319 / DSM 5812 / JCM 6584 / H10) (Clostridium cellulolyticum).